The following is a 72-amino-acid chain: Conorfamide-Tx2 (72 aa).

A signal peptide spans 1-19; it reads MSGRGFLLLALLLLVTVEA. The propeptide occupies 20 to 25; it reads TRVEKK. Residues 32–39 are positively charged region crucial for activity against MRGPRX1 receptors; that stretch reads AWSGPRNR. The residue at position 43 (Ile43) is an Isoleucine amide. Residues 44–72 constitute a propeptide that is removed on maturation; it reads GRRDMQSPLLSERLRFRALGFRQPSSQKQ.

The protein belongs to the FARP (FMRFamide related peptide) family. As to expression, expressed by the venom duct.

The protein localises to the secreted. In terms of biological role, this peptide activates human sensory neuron-specific G-protein coupled receptors MRGPRX1, but not mouse receptors (EC(50)=0.54 uM). Compared with the agonist chloroquine (anti-malaria drug), it is 600-fold more potent. In vivo, induces itch sensation, since intradermal cheek injection into humanized transgenic mouse (mouse MRGPRX1 replaced by human MRGPRX1) induces scratching. In vivo, treatment of zebrafish larvae with high doses (10 uM) induces hypoactivity at the beginning of the experiment during the dark phase and hyperactivity in the strobe phase after one hour, even after the removal of the toxin from the solution. This chain is Conorfamide-Tx2, found in Conus textile (Cloth-of-gold cone).